The sequence spans 508 residues: Mevalonate kinase ERG12 (508 aa).

Positions 1–46 (MPPSNPAMVNGLNGSHANGNGNGHNHISDSGSETSGESSNGSGRRR) are disordered. A compositionally biased stretch (low complexity) spans 10–42 (NGLNGSHANGNGNGHNHISDSGSETSGESSNGS). Residues Lys-68, Ser-200, and 205–211 (GAGLGSS) each bind ATP. Ser-211 and Glu-256 together coordinate Mg(2+). The active-site Proton acceptor is the Asp-267.

This sequence belongs to the GHMP kinase family. Mevalonate kinase subfamily. Homodimer. Requires Mg(2+) as cofactor.

Its subcellular location is the cytoplasm. The protein localises to the cytosol. It carries out the reaction (R)-mevalonate + ATP = (R)-5-phosphomevalonate + ADP + H(+). Its pathway is isoprenoid biosynthesis; isopentenyl diphosphate biosynthesis via mevalonate pathway; isopentenyl diphosphate from (R)-mevalonate: step 1/3. Mevalonate kinase; part of the second module of ergosterol biosynthesis pathway that includes the middle steps of the pathway. ERG12 converts mevalonate into 5-phosphomevalonate. The second module is carried out in the vacuole and involves the formation of farnesyl diphosphate, which is also an important intermediate in the biosynthesis of ubiquinone, dolichol, heme and prenylated proteins. Activity by the mevalonate kinase ERG12 (FG05912) first converts mevalonate into 5-phosphomevalonate. 5-phosphomevalonate is then further converted to 5-diphosphomevalonate by the phosphomevalonate kinase ERG8 (FG09764). The diphosphomevalonate decarboxylase ERG19 (FG10424) then produces isopentenyl diphosphate. The isopentenyl-diphosphate delta-isomerase IDI1 (FG09722) then catalyzes the 1,3-allylic rearrangement of the homoallylic substrate isopentenyl (IPP) to its highly electrophilic allylic isomer, dimethylallyl diphosphate (DMAPP). Finally the farnesyl diphosphate synthase ERG20 (FG06784) catalyzes the sequential condensation of isopentenyl pyrophosphate with dimethylallyl pyrophosphate, and then with the resultant geranylpyrophosphate to the ultimate product farnesyl pyrophosphate. This chain is Mevalonate kinase ERG12, found in Gibberella zeae (strain ATCC MYA-4620 / CBS 123657 / FGSC 9075 / NRRL 31084 / PH-1) (Wheat head blight fungus).